The following is a 94-amino-acid chain: RxLR effector protein PITG_15972 (94 aa).

Positions 1 to 21 (MRAVYILAMACAATLQASSSA) are cleaved as a signal peptide. Residues 50 to 65 (RLLRVEDKEEETEEER) carry the RxLR-dEER motif.

This sequence belongs to the RxLR effector family.

Its subcellular location is the secreted. It localises to the host cytoplasm. It is found in the host nucleus. In terms of biological role, effector that enhances P.infestans colonization of Nicotiana benthamiana leaves. This chain is RxLR effector protein PITG_15972, found in Phytophthora infestans (strain T30-4) (Potato late blight agent).